A 214-amino-acid polypeptide reads, in one-letter code: Holliday junction branch migration complex subunit RuvA (214 aa).

Residues methionine 1–lysine 67 form a domain I region. The segment at serine 68 to serine 146 is domain II. Residues leucine 147–glutamate 154 form a flexible linker region. The tract at residues glutamine 155 to alanine 214 is domain III.

The protein belongs to the RuvA family. Homotetramer. Forms an RuvA(8)-RuvB(12)-Holliday junction (HJ) complex. HJ DNA is sandwiched between 2 RuvA tetramers; dsDNA enters through RuvA and exits via RuvB. An RuvB hexamer assembles on each DNA strand where it exits the tetramer. Each RuvB hexamer is contacted by two RuvA subunits (via domain III) on 2 adjacent RuvB subunits; this complex drives branch migration. In the full resolvosome a probable DNA-RuvA(4)-RuvB(12)-RuvC(2) complex forms which resolves the HJ.

The protein localises to the cytoplasm. In terms of biological role, the RuvA-RuvB-RuvC complex processes Holliday junction (HJ) DNA during genetic recombination and DNA repair, while the RuvA-RuvB complex plays an important role in the rescue of blocked DNA replication forks via replication fork reversal (RFR). RuvA specifically binds to HJ cruciform DNA, conferring on it an open structure. The RuvB hexamer acts as an ATP-dependent pump, pulling dsDNA into and through the RuvAB complex. HJ branch migration allows RuvC to scan DNA until it finds its consensus sequence, where it cleaves and resolves the cruciform DNA. This is Holliday junction branch migration complex subunit RuvA from Synechococcus sp. (strain CC9605).